We begin with the raw amino-acid sequence, 360 residues long: Biotin synthase (360 aa).

The interval 1–21 (MTQLNIAPASTDTAAASNNNA) is disordered. Positions 62-289 (NTVQLSTLLS…RAMVRLSAGR (228 aa)) constitute a Radical SAM core domain. Positions 77, 81, and 84 each coordinate [4Fe-4S] cluster. [2Fe-2S] cluster is bound by residues C121, C152, C212, and R284.

Belongs to the radical SAM superfamily. Biotin synthase family. Homodimer. [4Fe-4S] cluster serves as cofactor. It depends on [2Fe-2S] cluster as a cofactor.

The catalysed reaction is (4R,5S)-dethiobiotin + (sulfur carrier)-SH + 2 reduced [2Fe-2S]-[ferredoxin] + 2 S-adenosyl-L-methionine = (sulfur carrier)-H + biotin + 2 5'-deoxyadenosine + 2 L-methionine + 2 oxidized [2Fe-2S]-[ferredoxin]. The protein operates within cofactor biosynthesis; biotin biosynthesis; biotin from 7,8-diaminononanoate: step 2/2. Catalyzes the conversion of dethiobiotin (DTB) to biotin by the insertion of a sulfur atom into dethiobiotin via a radical-based mechanism. This is Biotin synthase from Paraburkholderia xenovorans (strain LB400).